A 1390-amino-acid polypeptide reads, in one-letter code: MSYSFTEKKRLRKSFAKRESVQEVPYLLAMQLESYAAFLQADTPADKRTDTGLQAAFSSVFPIVSHSGNARLDFVSYNLGQEPFDVKECQQRGLTYAAPLRVKVRLTIMDKEASKPTVKEVKEQEVYMGELPLMTENGSFVINGTERVIVSQLHRSPGVFFEHDRGKTHSSGKLLFSARIIPYRGSWLDFEFDPKDYLYFRVDRRRKMPVTILLKALGFTPEQILETFYDFDTFHIAKKGVQFELVPERLRGEVAKFDILDKDGKVIVAKDKRITVKHIRDMEKSGISKITVPEEFLLGRSLAAGIVDKTTGEIIANANDEVTESLLDKLREADVNKINTLYANDLDHGDYISQTLRIDEIPDEYSARVAIYRMMRPGEPPTEEAVQALFEGLFFNEDRYDLSAVGRMKFNRRAFPEKIEERTAAWLRRFYEKVGPQGAEGPGTLSNDDILAVIAVLIELRNGRGEIDDIDHLGNRRIRSVGELAENQFRAGLVRVERAVKERLSQAESDNLMPHDLINAKPVSSAIREFFGSSQPSQFMDQTNPLSEITHKRRVSALGPGGLTRERAGFEVRDVHSTHYGRVCPIETPEGPNIGLINSLALYSRTNQYGFLETPYRRVADNKVSDQIDYLSAIEESQYMIAQANSELDQDGRFKEDLVSARYHNEFTMAQPDRVQYMDVAPGQIVSVAASLIPFLEHDDANRALMGANMQRQAVPCLRAEKALVGTGIERTVAVDSGTVVTARRGGVVDYVDSSRIVVRVHDEEAAAGEVGVDIYNLIKYTRSNQNTNINQRPLVNVGDVLARGDVIADGASTDMGELALGQNMLVAFMPWNGYNFEDSILISERVVADDRYTSIHIEELSVVARDTKLGAEEITRDISNLSERMLGRLDESGIIYIGAEVEAGDVLVGKVTPKGETQLTPEEKLLRAIFGEKASDVKDTSLRVPSGMSGTVIDVQVFTREGIERDARAQQIIDDQLADYKQDLADQMRIVEDDAFGRIRRLIEGKVATGGPQKLKKGETVTAEYLDGLARYDWFDIRLSDEDVARQLEQLRDSLSQARIEFDSKFEEKKRKLTQGDELPPGVQKMVKVYLAVKRRIQPGDKMAGRHGNKGVVSKIVPIEDMPHMADGTPMDIVLNPLGVPSRMNIGQILEVHLGWAAKGLGIRIGNMLQAQAKAAELRDFLEQVYNKSNGKSEDIASLSDDEVIDLAKNLRSGVPFATPVFDGATEADIKAMLDLAFPDDDPRTQQLQFASGKTQVTLFDGRTGDAFERPVTVGYMHVLKLHHLVDDKMHARSTGPYSLVTQQPLGGKAQFGGQRFGEMEVWALEAYGASYTLQEMLTVKSDDVTGRTKVYENIVKGEHKIDAGMPESFNVLVKEIRSLAIDIDLDRN.

This sequence belongs to the RNA polymerase beta chain family. As to quaternary structure, the RNAP catalytic core consists of 2 alpha, 1 beta, 1 beta' and 1 omega subunit. When a sigma factor is associated with the core the holoenzyme is formed, which can initiate transcription.

The enzyme catalyses RNA(n) + a ribonucleoside 5'-triphosphate = RNA(n+1) + diphosphate. DNA-dependent RNA polymerase catalyzes the transcription of DNA into RNA using the four ribonucleoside triphosphates as substrates. The chain is DNA-directed RNA polymerase subunit beta from Methylobacillus flagellatus (strain ATCC 51484 / DSM 6875 / VKM B-1610 / KT).